The chain runs to 60 residues: Large ribosomal subunit protein uL30 (60 aa).

The protein belongs to the universal ribosomal protein uL30 family. As to quaternary structure, part of the 50S ribosomal subunit.

The sequence is that of Large ribosomal subunit protein uL30 from Carboxydothermus hydrogenoformans (strain ATCC BAA-161 / DSM 6008 / Z-2901).